The chain runs to 591 residues: Pyruvate kinase 2 (591 aa).

Residue Arg-38 participates in substrate binding. The K(+) site is built by Asn-40, Ser-42, and Asp-72. 40 to 43 (NFSH) lines the ATP pocket. Arg-79 and Lys-164 together coordinate ATP. Glu-229 serves as a coordination point for Mg(2+). Positions 252, 253, and 285 each coordinate substrate. Asp-253 provides a ligand contact to Mg(2+).

This sequence belongs to the pyruvate kinase family. In the C-terminal section; belongs to the PEP-utilizing enzyme family. Homotetramer. Mg(2+) serves as cofactor. It depends on K(+) as a cofactor.

It carries out the reaction pyruvate + ATP = phosphoenolpyruvate + ADP + H(+). It functions in the pathway carbohydrate degradation; glycolysis; pyruvate from D-glyceraldehyde 3-phosphate: step 5/5. In Synechocystis sp. (strain ATCC 27184 / PCC 6803 / Kazusa), this protein is Pyruvate kinase 2 (pyk2).